The primary structure comprises 177 residues: Probetacellulin (177 aa).

The N-terminal stretch at M1–A31 is a signal peptide. The Extracellular segment spans residues D32 to Q118. 3 N-linked (GlcNAc...) asparagine glycosylation sites follow: N34, N42, and N52. Positions H65 to E105 constitute an EGF-like domain. 3 cysteine pairs are disulfide-bonded: C69–C82, C77–C93, and C95–C104. Residues L112–A177 constitute a propeptide, removed in mature form. A helical membrane pass occupies residues I119 to C139. The Cytoplasmic portion of the chain corresponds to T140 to A177. The interval K153 to A177 is disordered. A compositionally biased stretch (basic and acidic residues) spans E154–I167.

Monomer. Interacts with EGFR and ERBB4. Found in several mouse tissues including kidney, uterus and liver, as well as in beta tumor cell line and MCF-7 cells. It is not detected in the brain.

The protein resides in the secreted. It is found in the extracellular space. The protein localises to the cell membrane. Functionally, growth factor that binds to EGFR, ERBB4 and other EGF receptor family members. Potent mitogen for retinal pigment epithelial cells and vascular smooth muscle cells. In Mus musculus (Mouse), this protein is Probetacellulin (Btc).